Here is a 76-residue protein sequence, read N- to C-terminus: Small ribosomal subunit protein bS18 (76 aa).

This sequence belongs to the bacterial ribosomal protein bS18 family. As to quaternary structure, part of the 30S ribosomal subunit. Forms a tight heterodimer with protein bS6.

Binds as a heterodimer with protein bS6 to the central domain of the 16S rRNA, where it helps stabilize the platform of the 30S subunit. This chain is Small ribosomal subunit protein bS18, found in Azotobacter vinelandii (strain DJ / ATCC BAA-1303).